A 95-amino-acid polypeptide reads, in one-letter code: Aspartyl/glutamyl-tRNA(Asn/Gln) amidotransferase subunit C (95 aa).

Belongs to the GatC family. In terms of assembly, heterotrimer of A, B and C subunits.

It carries out the reaction L-glutamyl-tRNA(Gln) + L-glutamine + ATP + H2O = L-glutaminyl-tRNA(Gln) + L-glutamate + ADP + phosphate + H(+). It catalyses the reaction L-aspartyl-tRNA(Asn) + L-glutamine + ATP + H2O = L-asparaginyl-tRNA(Asn) + L-glutamate + ADP + phosphate + 2 H(+). Allows the formation of correctly charged Asn-tRNA(Asn) or Gln-tRNA(Gln) through the transamidation of misacylated Asp-tRNA(Asn) or Glu-tRNA(Gln) in organisms which lack either or both of asparaginyl-tRNA or glutaminyl-tRNA synthetases. The reaction takes place in the presence of glutamine and ATP through an activated phospho-Asp-tRNA(Asn) or phospho-Glu-tRNA(Gln). The chain is Aspartyl/glutamyl-tRNA(Asn/Gln) amidotransferase subunit C from Desulforapulum autotrophicum (strain ATCC 43914 / DSM 3382 / VKM B-1955 / HRM2) (Desulfobacterium autotrophicum).